Reading from the N-terminus, the 293-residue chain is Triacylglycerol lipase (293 aa).

Positions 10 to 206 (PILLVHGLFG…YYSWSGIIKG (197 aa)) constitute an AB hydrolase-1 domain. L17 contributes to the substrate binding site. S83 functions as the Nucleophile in the catalytic mechanism. Residue Q84 participates in substrate binding. D217 is a binding site for Ca(2+). Catalysis depends on charge relay system residues D238 and H260. The Ca(2+) site is built by D262, H266, and R269.

The protein belongs to the AB hydrolase superfamily. Pseudomonas lipase family. It depends on Ca(2+) as a cofactor.

Its subcellular location is the secreted. It catalyses the reaction a triacylglycerol + H2O = a diacylglycerol + a fatty acid + H(+). In terms of biological role, catalyzes the hydrolysis of triacylglycerols, with the highest activity with tributyrin (C4), lower activity with tricaprylin (C8), and much lower activity with triacetin (C2), trilaurin (C12) and triolein (C18). This is Triacylglycerol lipase (lips) from Pseudomonas fragi.